The primary structure comprises 430 residues: 3-phosphoshikimate 1-carboxyvinyltransferase (430 aa).

3-phosphoshikimate-binding residues include Lys-23, Ser-24, and Arg-28. Residue Lys-23 coordinates phosphoenolpyruvate. Phosphoenolpyruvate contacts are provided by Gly-93 and Arg-121. 3-phosphoshikimate-binding residues include Ser-166, Gln-168, Asp-313, and Lys-340. Gln-168 contacts phosphoenolpyruvate. The Proton acceptor role is filled by Asp-313. Phosphoenolpyruvate contacts are provided by Arg-344 and Arg-386.

Belongs to the EPSP synthase family. Monomer.

The protein localises to the cytoplasm. It carries out the reaction 3-phosphoshikimate + phosphoenolpyruvate = 5-O-(1-carboxyvinyl)-3-phosphoshikimate + phosphate. The protein operates within metabolic intermediate biosynthesis; chorismate biosynthesis; chorismate from D-erythrose 4-phosphate and phosphoenolpyruvate: step 6/7. Catalyzes the transfer of the enolpyruvyl moiety of phosphoenolpyruvate (PEP) to the 5-hydroxyl of shikimate-3-phosphate (S3P) to produce enolpyruvyl shikimate-3-phosphate and inorganic phosphate. The polypeptide is 3-phosphoshikimate 1-carboxyvinyltransferase (Anaeromyxobacter sp. (strain Fw109-5)).